A 325-amino-acid polypeptide reads, in one-letter code: RNA ligase 1 (325 aa).

Mg(2+) is required as a cofactor. It depends on Mn(2+) as a cofactor. AMPylates itself (auto-AMPylation).

The enzyme catalyses ATP + (ribonucleotide)n-3'-hydroxyl + 5'-phospho-(ribonucleotide)m = (ribonucleotide)n+m + AMP + diphosphate.. Its function is as follows. Functions as an RNA ligase, in vitro. The ligation reaction entails three nucleotidyl transfer steps. In the first step, the RNA ligase reacts with ATP in the absence of nucleic acid to form a covalent ligase-AMP intermediate and release pyrophosphate. In step 2, the ligase-AMP binds to the nucleic acid and transfers the adenylate to the 5'-PO4 terminus to form an adenylylated intermediate. In step 3, the RNA ligase directs the attack of the 3'-OH on the 5'-phosphoanhydride linkage, resulting in a repaired 3'-5' phosphodiester and release of AMP. Exhibits selectivity for single-stranded RNA substrates and may not have nick-sealing activity on double-stranded DNA-RNA hybrids. May play a role in maintaining RNA integrity under stress conditions, for example in response to reactive oxygen species (ROS). The chain is RNA ligase 1 from Pongo abelii (Sumatran orangutan).